The chain runs to 335 residues: Fructose-1,6-bisphosphatase class 1 (335 aa).

Residues Glu92, Asp114, Leu116, and Asp117 each contribute to the Mg(2+) site. Substrate is bound by residues 117 to 120 (DGSS), Asn209, and Lys275. Glu281 contributes to the Mg(2+) binding site.

Belongs to the FBPase class 1 family. In terms of assembly, homotetramer. Mg(2+) is required as a cofactor.

It is found in the cytoplasm. The catalysed reaction is beta-D-fructose 1,6-bisphosphate + H2O = beta-D-fructose 6-phosphate + phosphate. Its pathway is carbohydrate biosynthesis; gluconeogenesis. In Polaromonas sp. (strain JS666 / ATCC BAA-500), this protein is Fructose-1,6-bisphosphatase class 1.